A 193-amino-acid polypeptide reads, in one-letter code: Putative RNA methyltransferase At5g10620 (193 aa).

S-adenosyl-L-methionine-binding positions include Leu-110, Gly-142, and 161 to 166 (LSSMVL).

Belongs to the RNA methyltransferase RlmH family.

This is Putative RNA methyltransferase At5g10620 from Arabidopsis thaliana (Mouse-ear cress).